A 358-amino-acid chain; its full sequence is Peptide chain release factor 1 (358 aa).

N5-methylglutamine is present on Q234.

This sequence belongs to the prokaryotic/mitochondrial release factor family. In terms of processing, methylated by PrmC. Methylation increases the termination efficiency of RF1.

It localises to the cytoplasm. Its function is as follows. Peptide chain release factor 1 directs the termination of translation in response to the peptide chain termination codons UAG and UAA. The sequence is that of Peptide chain release factor 1 from Leifsonia xyli subsp. xyli (strain CTCB07).